The primary structure comprises 200 residues: Rho GDP-dissociation inhibitor 2 (200 aa).

Residues 1-39 (MTEKDAQPQLEEADDDLDSKLNYKPPPQKSLKELQEMDK) are disordered. Position 2 is an N-acetylthreonine (Thr2). Lys20 is modified (N6-acetyllysine). Tyr23 bears the Phosphotyrosine mark. N6-acetyllysine occurs at positions 24, 39, 46, 101, and 123. Positions 30–39 (SLKELQEMDK) are enriched in basic and acidic residues. Ser144 carries the phosphoserine modification. Lys174 is modified (N6-acetyllysine).

It belongs to the Rho GDI family. As to quaternary structure, interacts with RHOA. Interacts with RAC1. Interacts with RAC2. Interacts with CDC42. Preferentially expressed in hematopoietic cells.

It localises to the cytoplasm. The protein localises to the cytosol. Its function is as follows. Regulates the GDP/GTP exchange reaction of the Rho proteins by inhibiting the dissociation of GDP from them, and the subsequent binding of GTP to them. Regulates reorganization of the actin cytoskeleton mediated by Rho family members. This Mus musculus (Mouse) protein is Rho GDP-dissociation inhibitor 2 (Arhgdib).